The primary structure comprises 193 residues: FMN-dependent NADH:quinone oxidoreductase (193 aa).

FMN contacts are provided by residues serine 9, 15–17, and 137–140; these read SSS and TSGG.

The protein belongs to the azoreductase type 1 family. As to quaternary structure, homodimer. The cofactor is FMN.

It carries out the reaction 2 a quinone + NADH + H(+) = 2 a 1,4-benzosemiquinone + NAD(+). It catalyses the reaction N,N-dimethyl-1,4-phenylenediamine + anthranilate + 2 NAD(+) = 2-(4-dimethylaminophenyl)diazenylbenzoate + 2 NADH + 2 H(+). Functionally, quinone reductase that provides resistance to thiol-specific stress caused by electrophilic quinones. Its function is as follows. Also exhibits azoreductase activity. Catalyzes the reductive cleavage of the azo bond in aromatic azo compounds to the corresponding amines. This Pelagibacter ubique (strain HTCC1062) protein is FMN-dependent NADH:quinone oxidoreductase.